The chain runs to 948 residues: MLKILNTVLLFFDCFSTGTFFVLLIYLFTRLRTHLLHFSSSNCHLDVIIYQSRAVIIFLVVFVYFIGVLTCKINDKILVHTMLRNKRQLNTLFYTLILFTFALCSLSSVLFVPYTSFAIFLLSTSVFLLFSDLSVFFIVLEYYLLEIELVNYEHAKRHCLLSHLFSNQLFVDHMLGMFLKTSLFSISTTSKYAYLESIFKCTLMEQIIYIMIVFVFLPSFMRIFASYAKRMYGEQKKCLVSNKGVSSSTRKRRHSYSSGHSYVEYRRMSVHNLIGYVVNPNCHYKCWSTTFVIFVSLIILHLNNRYSERISSFKHNSSENEVFPVLYHITAYEVTSIFHFIYNIFHVINANLVVYLFLGLFLFKRIRLNKPINSQLRNLNIPKIKETLISDQVKQSPVLPKFSKKLNDIPLQSRKRIYCLHKDDDYIDRNDSSSVSTFSNTCKNSNERPSNVLDLDMLTEKIKQGLGHELSDTEILQLLSHGRLKTRELESVVRNPFRAVELRRLDLSTFLNNPHIIERIPYKDYDYRLVYGQCCEEVIGYMPIPVGKIGPLLLDGRSHYIPLATTEGCLVASTNRGCRAIFLAGGIKSVVYRDQMTRAPVVWFPSIIDSVKCIAWIDSEEGFQTLKSAFDKTSAHVNLLSVFACPAGRYIHIRFAARTGDAMGMNMVSKATDSALHCLKKYFSNMQVISLSGNMCTDKKPATINTILGRGKSVIAEAHLSADVLAQVLHTNAQRLARLTHSKNWIGSAMAGCPGMMGCNAHAANIIAGMFAATGQDLAQVVDSSSCLTQLEVDLSDDSLVASVTMPCLEVGTVGGGTRLSGQRACLDLLDLSVDRPTEHLSRIIAGTVLAAELSLMAALDTDDLVKAHMHFNRAKQSTNSHSCSHSTTTDNNDNISNIYDNHNVALSSKIPVTDNSDIRESVHSLHVKPFPVKSDLSVNPEISHYTM.

Helical transmembrane passes span 9–25 (LLFF…VLLI), 55–71 (VIIF…VLTC), 96–112 (LILF…VLFV), 124–140 (TSVF…FIVL), 207–223 (IIYI…FMRI), and 286–302 (CWST…ILHL). Residue asparagine 316 is glycosylated (N-linked (GlcNAc...) asparagine). The helical transmembrane segment at 347 to 363 (VINANLVVYLFLGLFLF) threads the bilayer. A linker region spans residues 364–466 (KRIRLNKPIN…MLTEKIKQGL (103 aa)). Asparagine 430 is a glycosylation site (N-linked (GlcNAc...) asparagine). Residues 467 to 948 (GHELSDTEIL…VNPEISHYTM (482 aa)) are catalytic. Catalysis depends on charge relay system residues glutamate 567, lysine 699, and aspartate 777. The active-site Proton donor is histidine 869. An N-linked (GlcNAc...) asparagine glycan is attached at asparagine 895.

It belongs to the HMG-CoA reductase family.

The protein resides in the endoplasmic reticulum membrane. It is found in the peroxisome membrane. It carries out the reaction (R)-mevalonate + 2 NADP(+) + CoA = (3S)-3-hydroxy-3-methylglutaryl-CoA + 2 NADPH + 2 H(+). It participates in metabolic intermediate biosynthesis; (R)-mevalonate biosynthesis; (R)-mevalonate from acetyl-CoA: step 3/3. In terms of biological role, this transmembrane glycoprotein is involved in the control of cholesterol and nonsterol isoprenoid compounds biosynthesis. It is the rate-limiting enzyme of sterol biosynthesis. This is 3-hydroxy-3-methylglutaryl-coenzyme A reductase from Schistosoma mansoni (Blood fluke).